The primary structure comprises 508 residues: Mitochondrial distribution and morphology protein 10 (508 aa).

The interval Pro-160–Asn-195 is disordered.

This sequence belongs to the MDM10 family. In terms of assembly, component of the ER-mitochondria encounter structure (ERMES) or MDM complex, composed of MMM1, MDM10, MDM12 and MDM34. Associates with the mitochondrial outer membrane sorting assembly machinery SAM(core) complex.

It localises to the mitochondrion outer membrane. Component of the ERMES/MDM complex, which serves as a molecular tether to connect the endoplasmic reticulum and mitochondria. Components of this complex are involved in the control of mitochondrial shape and protein biogenesis and may function in phospholipid exchange. MDM10 is involved in the late assembly steps of the general translocase of the mitochondrial outer membrane (TOM complex). Functions in the TOM40-specific route of the assembly of outer membrane beta-barrel proteins, including the association of TOM40 with the receptor TOM22 and small TOM proteins. Can associate with the SAM(core) complex as well as the MDM12-MMM1 complex, both involved in late steps of the major beta-barrel assembly pathway, that is responsible for biogenesis of all outer membrane beta-barrel proteins. May act as a switch that shuttles between both complexes and channels precursor proteins into the TOM40-specific pathway. Plays a role in mitochondrial morphology and in the inheritance of mitochondria. This Cryptococcus neoformans var. neoformans serotype D (strain B-3501A) (Filobasidiella neoformans) protein is Mitochondrial distribution and morphology protein 10.